Here is a 492-residue protein sequence, read N- to C-terminus: 3-octaprenyl-4-hydroxybenzoate carboxy-lyase (492 aa).

Asparagine 175 is a binding site for Mn(2+). Prenylated FMN is bound by residues 178–180 (IYR), 192–194 (RWL), and 197–198 (RG). Mn(2+) is bound at residue glutamate 241. The Proton donor role is filled by aspartate 290.

This sequence belongs to the UbiD family. Homohexamer. The cofactor is prenylated FMN. Requires Mn(2+) as cofactor.

The protein resides in the cell membrane. It carries out the reaction a 4-hydroxy-3-(all-trans-polyprenyl)benzoate + H(+) = a 2-(all-trans-polyprenyl)phenol + CO2. The protein operates within cofactor biosynthesis; ubiquinone biosynthesis. In terms of biological role, catalyzes the decarboxylation of 3-octaprenyl-4-hydroxy benzoate to 2-octaprenylphenol, an intermediate step in ubiquinone biosynthesis. The sequence is that of 3-octaprenyl-4-hydroxybenzoate carboxy-lyase from Salmonella paratyphi A (strain ATCC 9150 / SARB42).